Here is a 994-residue protein sequence, read N- to C-terminus: Glycine dehydrogenase (decarboxylating) (994 aa).

Positions 1–20 are disordered; that stretch reads MTDHAENRCGLEGPRPFSSR. Lys-716 carries the N6-(pyridoxal phosphate)lysine modification.

This sequence belongs to the GcvP family. As to quaternary structure, the glycine cleavage system is composed of four proteins: P, T, L and H. The cofactor is pyridoxal 5'-phosphate.

The enzyme catalyses N(6)-[(R)-lipoyl]-L-lysyl-[glycine-cleavage complex H protein] + glycine + H(+) = N(6)-[(R)-S(8)-aminomethyldihydrolipoyl]-L-lysyl-[glycine-cleavage complex H protein] + CO2. The glycine cleavage system catalyzes the degradation of glycine. The P protein binds the alpha-amino group of glycine through its pyridoxal phosphate cofactor; CO(2) is released and the remaining methylamine moiety is then transferred to the lipoamide cofactor of the H protein. In Cutibacterium acnes (strain DSM 16379 / KPA171202) (Propionibacterium acnes), this protein is Glycine dehydrogenase (decarboxylating).